The chain runs to 101 residues: Ubiquitin-related modifier 1 (101 aa).

A 1-thioglycine modification is found at Gly101. Residue Gly101 forms a Glycyl lysine isopeptide (Gly-Lys) (interchain with K-? in acceptor proteins) linkage.

The protein belongs to the URM1 family. In terms of processing, C-terminal thiocarboxylation occurs in 2 steps, it is first acyl-adenylated (-COAMP) via the hesA/moeB/thiF part of UBA4, then thiocarboxylated (-COSH) via the rhodanese domain of UBA4.

It localises to the cytoplasm. Its pathway is tRNA modification; 5-methoxycarbonylmethyl-2-thiouridine-tRNA biosynthesis. Acts as a sulfur carrier required for 2-thiolation of mcm(5)S(2)U at tRNA wobble positions of cytosolic tRNA(Lys), tRNA(Glu) and tRNA(Gln). Serves as sulfur donor in tRNA 2-thiolation reaction by being thiocarboxylated (-COSH) at its C-terminus by the MOCS3 homolog UBA4. The sulfur is then transferred to tRNA to form 2-thiolation of mcm(5)S(2)U. Prior mcm(5) tRNA modification by the elongator complex is required for 2-thiolation. Also acts as a ubiquitin-like protein (UBL) that is covalently conjugated via an isopeptide bond to lysine residues of target proteins such as AHP1. The thiocarboxylated form serves as substrate for conjugation and oxidative stress specifically induces the formation of UBL-protein conjugates. This Candida albicans (strain SC5314 / ATCC MYA-2876) (Yeast) protein is Ubiquitin-related modifier 1.